Consider the following 294-residue polypeptide: Acetyl-coenzyme A carboxylase carboxyl transferase subunit beta (294 aa).

The CoA carboxyltransferase N-terminal domain occupies 30–294; sequence IMTKCPECKK…PEAGGESDGE (265 aa). Residues cysteine 34, cysteine 37, cysteine 53, and cysteine 56 each coordinate Zn(2+). A C4-type zinc finger spans residues 34 to 56; it reads CPECKKIMYTKELQKNLMVCNYC.

This sequence belongs to the AccD/PCCB family. In terms of assembly, acetyl-CoA carboxylase is a heterohexamer composed of biotin carboxyl carrier protein (AccB), biotin carboxylase (AccC) and two subunits each of ACCase subunit alpha (AccA) and ACCase subunit beta (AccD). Zn(2+) is required as a cofactor.

The protein resides in the cytoplasm. It carries out the reaction N(6)-carboxybiotinyl-L-lysyl-[protein] + acetyl-CoA = N(6)-biotinyl-L-lysyl-[protein] + malonyl-CoA. It functions in the pathway lipid metabolism; malonyl-CoA biosynthesis; malonyl-CoA from acetyl-CoA: step 1/1. Functionally, component of the acetyl coenzyme A carboxylase (ACC) complex. Biotin carboxylase (BC) catalyzes the carboxylation of biotin on its carrier protein (BCCP) and then the CO(2) group is transferred by the transcarboxylase to acetyl-CoA to form malonyl-CoA. In Listeria innocua serovar 6a (strain ATCC BAA-680 / CLIP 11262), this protein is Acetyl-coenzyme A carboxylase carboxyl transferase subunit beta.